We begin with the raw amino-acid sequence, 362 residues long: Chorismate synthase (362 aa).

Residue R47 participates in NADP(+) binding. FMN-binding positions include 124-126 (RSS), G286, 301-305 (KPTAT), and R327.

This sequence belongs to the chorismate synthase family. In terms of assembly, homotetramer. Requires FMNH2 as cofactor.

The enzyme catalyses 5-O-(1-carboxyvinyl)-3-phosphoshikimate = chorismate + phosphate. It participates in metabolic intermediate biosynthesis; chorismate biosynthesis; chorismate from D-erythrose 4-phosphate and phosphoenolpyruvate: step 7/7. Catalyzes the anti-1,4-elimination of the C-3 phosphate and the C-6 proR hydrogen from 5-enolpyruvylshikimate-3-phosphate (EPSP) to yield chorismate, which is the branch point compound that serves as the starting substrate for the three terminal pathways of aromatic amino acid biosynthesis. This reaction introduces a second double bond into the aromatic ring system. The protein is Chorismate synthase of Rippkaea orientalis (strain PCC 8801 / RF-1) (Cyanothece sp. (strain PCC 8801)).